A 594-amino-acid polypeptide reads, in one-letter code: DNA mismatch repair protein MutL (594 aa).

Belongs to the DNA mismatch repair MutL/HexB family.

This protein is involved in the repair of mismatches in DNA. It is required for dam-dependent methyl-directed DNA mismatch repair. May act as a 'molecular matchmaker', a protein that promotes the formation of a stable complex between two or more DNA-binding proteins in an ATP-dependent manner without itself being part of a final effector complex. This chain is DNA mismatch repair protein MutL, found in Rhizorhabdus wittichii (strain DSM 6014 / CCUG 31198 / JCM 15750 / NBRC 105917 / EY 4224 / RW1) (Sphingomonas wittichii).